The sequence spans 364 residues: D-alanine--D-alanine ligase (364 aa).

The region spanning 140 to 346 (KKLALLEGIP…YSQLIDKLIS (207 aa)) is the ATP-grasp domain. 173–228 (ESEFSYPVFVKPANSGSSVGISKAKDREDLVLAIHEAFLYDTKILIEQAINAREIE) lines the ATP pocket. Asp-299, Glu-313, and Asn-315 together coordinate Mg(2+).

The protein belongs to the D-alanine--D-alanine ligase family. It depends on Mg(2+) as a cofactor. Mn(2+) is required as a cofactor.

The protein resides in the cytoplasm. It carries out the reaction 2 D-alanine + ATP = D-alanyl-D-alanine + ADP + phosphate + H(+). Its pathway is cell wall biogenesis; peptidoglycan biosynthesis. Functionally, cell wall formation. This Caldicellulosiruptor bescii (strain ATCC BAA-1888 / DSM 6725 / KCTC 15123 / Z-1320) (Anaerocellum thermophilum) protein is D-alanine--D-alanine ligase.